Consider the following 145-residue polypeptide: uncharacterized protein (145 aa).

The protein belongs to the SAP18 family.

The protein localises to the cytoplasm. The protein resides in the nucleus. This is an uncharacterized protein from Schizosaccharomyces pombe (strain 972 / ATCC 24843) (Fission yeast).